A 548-amino-acid chain; its full sequence is Membrane protein insertase YidC (548 aa).

Residues 6 to 26 (NLLIIALLFVSFMIWQAWEQD) form a helical membrane-spanning segment. A disordered region spans residues 28–52 (NPQPQQQTTQTTTTAAGSAADQGVP). The segment covering 29-41 (PQPQQQTTQTTTT) has biased composition (low complexity). 4 helical membrane passes run 345-365 (KFIHSFLGNWGFSIIVITFIV), 420-440 (LGGCFPLIIQMPIFLALYYML), 458-478 (LSAQDPYYILPIIMGATMFFI), and 499-519 (PVIFTVFFLWFPSGLVVYYIV).

The protein belongs to the OXA1/ALB3/YidC family. Type 1 subfamily. Interacts with the Sec translocase complex via SecD. Specifically interacts with transmembrane segments of nascent integral membrane proteins during membrane integration.

It localises to the cell inner membrane. Its function is as follows. Required for the insertion and/or proper folding and/or complex formation of integral membrane proteins into the membrane. Involved in integration of membrane proteins that insert both dependently and independently of the Sec translocase complex, as well as at least some lipoproteins. Aids folding of multispanning membrane proteins. The sequence is that of Membrane protein insertase YidC from Klebsiella pneumoniae subsp. pneumoniae (strain ATCC 700721 / MGH 78578).